The chain runs to 133 residues: Arsenate reductase 1 (133 aa).

Catalysis depends on nucleophile residues cysteine 10, cysteine 82, and cysteine 89. Intrachain disulfides connect cysteine 10/cysteine 82 and cysteine 82/cysteine 89.

The protein belongs to the low molecular weight phosphotyrosine protein phosphatase family. Thioredoxin-coupled ArsC subfamily.

The protein localises to the cytoplasm. The enzyme catalyses arsenate + [thioredoxin]-dithiol + H(+) = arsenite + [thioredoxin]-disulfide + H2O. In terms of biological role, catalyzes the reduction of arsenate [As(V)] to arsenite [As(III)]. The sequence is that of Arsenate reductase 1 from Staphylococcus haemolyticus (strain JCSC1435).